Here is a 394-residue protein sequence, read N- to C-terminus: Elongation factor Tu 2 (394 aa).

Residues 10–204 enclose the tr-type G domain; that stretch reads KPHVNVGTIG…ALDTYIPEPA (195 aa). The tract at residues 19-26 is G1; the sequence is GHVDHGKT. 19–26 contributes to the GTP binding site; it reads GHVDHGKT. Thr26 is a Mg(2+) binding site. The G2 stretch occupies residues 60–64; it reads GITIN. The segment at 81-84 is G3; that stretch reads DCPG. Residues 81 to 85 and 136 to 139 contribute to the GTP site; these read DCPGH and NKCD. The segment at 136-139 is G4; the sequence is NKCD. The G5 stretch occupies residues 174–176; that stretch reads SAL.

Belongs to the TRAFAC class translation factor GTPase superfamily. Classic translation factor GTPase family. EF-Tu/EF-1A subfamily. Monomer.

Its subcellular location is the cytoplasm. It catalyses the reaction GTP + H2O = GDP + phosphate + H(+). Its function is as follows. GTP hydrolase that promotes the GTP-dependent binding of aminoacyl-tRNA to the A-site of ribosomes during protein biosynthesis. The protein is Elongation factor Tu 2 of Shewanella frigidimarina (strain NCIMB 400).